Consider the following 319-residue polypeptide: Ferrochelatase (319 aa).

Fe cation contacts are provided by histidine 193 and glutamate 274.

Belongs to the ferrochelatase family.

It is found in the cytoplasm. The catalysed reaction is heme b + 2 H(+) = protoporphyrin IX + Fe(2+). It functions in the pathway porphyrin-containing compound metabolism; protoheme biosynthesis; protoheme from protoporphyrin-IX: step 1/1. Catalyzes the ferrous insertion into protoporphyrin IX. In Erwinia tasmaniensis (strain DSM 17950 / CFBP 7177 / CIP 109463 / NCPPB 4357 / Et1/99), this protein is Ferrochelatase.